A 118-amino-acid polypeptide reads, in one-letter code: Small ribosomal subunit protein uS13 (118 aa).

The segment at 92 to 118 (RRGLPVRGQRTKTNARTRKGPRKPIKK) is disordered.

This sequence belongs to the universal ribosomal protein uS13 family. Part of the 30S ribosomal subunit. Forms a loose heterodimer with protein S19. Forms two bridges to the 50S subunit in the 70S ribosome.

In terms of biological role, located at the top of the head of the 30S subunit, it contacts several helices of the 16S rRNA. In the 70S ribosome it contacts the 23S rRNA (bridge B1a) and protein L5 of the 50S subunit (bridge B1b), connecting the 2 subunits; these bridges are implicated in subunit movement. Contacts the tRNAs in the A and P-sites. In Yersinia pestis, this protein is Small ribosomal subunit protein uS13.